We begin with the raw amino-acid sequence, 273 residues long: Ribosomal RNA small subunit methyltransferase A (273 aa).

6 residues coordinate S-adenosyl-L-methionine: Asn-18, Leu-20, Gly-45, Glu-66, Asp-91, and Asn-113.

Belongs to the class I-like SAM-binding methyltransferase superfamily. rRNA adenine N(6)-methyltransferase family. RsmA subfamily.

The protein resides in the cytoplasm. The catalysed reaction is adenosine(1518)/adenosine(1519) in 16S rRNA + 4 S-adenosyl-L-methionine = N(6)-dimethyladenosine(1518)/N(6)-dimethyladenosine(1519) in 16S rRNA + 4 S-adenosyl-L-homocysteine + 4 H(+). Functionally, specifically dimethylates two adjacent adenosines (A1518 and A1519) in the loop of a conserved hairpin near the 3'-end of 16S rRNA in the 30S particle. May play a critical role in biogenesis of 30S subunits. The chain is Ribosomal RNA small subunit methyltransferase A from Shigella boydii serotype 4 (strain Sb227).